The sequence spans 506 residues: MKEYQVYLERDRSRQQDFLYPLIFREYIYGLAYSHDFNRSIFVENVGYDNKSSLLIVKRLITRMYQQNHLIISANDSNKNPFLGYNKNFYSQIISDGFAVVVEIPFFLQLSSSLEEAEIVKSYHNLRSIHSIFPFLEDKFTYLNYVSDIRIPYPIHLEILVQILRYWVKDASFFHLLRFFLYHFSNRNSLITPKKSISTFSKSNPRLFLFLYNFYVCEYESIFRFLRNQSSHLRLKSFSVFFERIFFYAKREHLVKVFPKDFSSTLTFFKDPFIHYVRYQGKSILASKNAPLLMNKWKHYFIHLWQCFFDVWSQPGTIHINQLSEHSFHFLGYFSNVRLNRSVVRSQMLQNTFLIEIVIKKLDIIVPIIPLIRSLAKAKFCNVLGHPLSKSVWADSSDFDIIDRFLRICRNLSHYYNGSSKKKNLYRIKYILRLSCIKTLACKHKSTVRAFLKKSGSEELLEEFFTEEEEILSLIFPRTSSTLQRLHRNRIWYLDILFSNDLVNHE.

The protein belongs to the intron maturase 2 family. MatK subfamily.

It is found in the plastid. The protein resides in the chloroplast. Functionally, usually encoded in the trnK tRNA gene intron. Probably assists in splicing its own and other chloroplast group II introns. This Wisteria frutescens (American wisteria) protein is Maturase K.